A 318-amino-acid chain; its full sequence is MTVKPELNEITPYLQFNRQEWGNFRKDTPLTLTESDLDKLQGQIEIVSLKEVTEIYLPLSRLLSFYVTARQTLQQATYQFLGKPEPKVPYIIGIAGSVAVGKSTTSRVLKALLSRWPDHPNVEVITTDGFLYSNAKLEKQGLMKRKGFPESYDMPSLLRVLNAIKSGQRNVRIPVYSHHYYDIVRGQYEIVDQPDIVILEGLNILQTGVRKTLQQLQVFVSDFFDFSLFVDAQAQVIQKWYIDRVLSFWRTTFKDPHSYFHYLTQMSETEVAAFAKHVWNEINKVNLMENILPYKNRAQLILEKAADHSIQKVYLRKI.

96 to 103 (GSVAVGKS) is an ATP binding site.

The protein belongs to the prokaryotic pantothenate kinase family.

The protein localises to the cytoplasm. It carries out the reaction (R)-pantothenate + ATP = (R)-4'-phosphopantothenate + ADP + H(+). It functions in the pathway cofactor biosynthesis; coenzyme A biosynthesis; CoA from (R)-pantothenate: step 1/5. The polypeptide is Pantothenate kinase (Coxiella burnetii (strain CbuK_Q154) (Coxiella burnetii (strain Q154))).